A 607-amino-acid polypeptide reads, in one-letter code: Large ribosomal subunit assembly factor BipA (607 aa).

One can recognise a tr-type G domain in the interval 3–198 (EKLRNIAIIA…AIVDHVPAPD (196 aa)). Residues 15 to 20 (DHGKTT) and 128 to 131 (NKVD) each bind GTP.

It belongs to the TRAFAC class translation factor GTPase superfamily. Classic translation factor GTPase family. BipA subfamily. Monomer.

Its subcellular location is the cytoplasm. The catalysed reaction is GTP + H2O = GDP + phosphate + H(+). A 50S ribosomal subunit assembly protein with GTPase activity, required for 50S subunit assembly at low temperatures, may also play a role in translation. Binds GTP and analogs. Binds the 70S ribosome between the 30S and 50S subunits, in a similar position as ribosome-bound EF-G; it contacts a number of ribosomal proteins, both rRNAs and the A-site tRNA. This chain is Large ribosomal subunit assembly factor BipA, found in Shigella flexneri.